Consider the following 128-residue polypeptide: Putative pre-16S rRNA nuclease (128 aa).

This sequence belongs to the YqgF nuclease family.

Its subcellular location is the cytoplasm. Could be a nuclease involved in processing of the 5'-end of pre-16S rRNA. This Campylobacter lari (strain RM2100 / D67 / ATCC BAA-1060) protein is Putative pre-16S rRNA nuclease.